The sequence spans 333 residues: Ribose-phosphate pyrophosphokinase (333 aa).

Residue 58–60 (DGE) participates in ATP binding. Mg(2+) contacts are provided by His-151 and Asp-190. Residue Lys-214 is part of the active site. D-ribose 5-phosphate contacts are provided by residues Arg-216, Asp-240, and 244–248 (DTAGT).

It belongs to the ribose-phosphate pyrophosphokinase family. Class I subfamily. Homohexamer. It depends on Mg(2+) as a cofactor.

It is found in the cytoplasm. It carries out the reaction D-ribose 5-phosphate + ATP = 5-phospho-alpha-D-ribose 1-diphosphate + AMP + H(+). It participates in metabolic intermediate biosynthesis; 5-phospho-alpha-D-ribose 1-diphosphate biosynthesis; 5-phospho-alpha-D-ribose 1-diphosphate from D-ribose 5-phosphate (route I): step 1/1. In terms of biological role, involved in the biosynthesis of the central metabolite phospho-alpha-D-ribosyl-1-pyrophosphate (PRPP) via the transfer of pyrophosphoryl group from ATP to 1-hydroxyl of ribose-5-phosphate (Rib-5-P). This Synechocystis sp. (strain ATCC 27184 / PCC 6803 / Kazusa) protein is Ribose-phosphate pyrophosphokinase.